The chain runs to 525 residues: Calcium uptake protein 1 homolog, mitochondrial (525 aa).

Positions 109–146 are disordered; sequence ADAGQRPSSAADVNGEDKSSESESEDSEDEEAGSDLHL. Residues 130 to 141 are compositionally biased toward acidic residues; the sequence is SESEDSEDEEAG. EF-hand domains lie at 268–303 and 459–494; these read ISRRHFEIAFRMFDLNGDGDVDCEEFEMVATLVRQQ and LSDHVVDVVFTIFDENNDNQLSNKEFISVMKNRVQR. Ca(2+) is bound by residues Asp-281, Asn-283, Asp-285, Asp-287, Glu-292, Asp-472, Asn-474, Asp-476, Gln-478, and Glu-483.

The protein belongs to the MICU1 family. MICU1 subfamily.

The protein localises to the mitochondrion intermembrane space. It is found in the mitochondrion inner membrane. Calcium sensor of the mitochondrial calcium uniporter (MCU) channel, which senses calcium level via its EF-hand domains. At low calcium levels, MICU1 occludes the pore of the MCU channel, preventing mitochondrial calcium uptake. At higher calcium levels, calcium-binding to MICU1 induces a conformational change that weakens MCU-MICU1 interactions and moves MICU1 away from the pore, allowing calcium permeation through the MCU channel. Also required to protect against manganese toxicity by preventing manganese uptake by MCU. During development, required in alpha/beta or gamma mushroom body neurons to support olfactory intermediate-term memory in the adult. This is Calcium uptake protein 1 homolog, mitochondrial from Drosophila melanogaster (Fruit fly).